Here is a 301-residue protein sequence, read N- to C-terminus: UDP-N-acetylenolpyruvoylglucosamine reductase 1 (301 aa).

The region spanning 29-196 (KIGGPADILI…LEAVFQLQAG (168 aa)) is the FAD-binding PCMH-type domain. The active site involves Arg-174. Ser-225 acts as the Proton donor in catalysis. The active site involves Glu-295.

The protein belongs to the MurB family. FAD serves as cofactor.

Its subcellular location is the cytoplasm. It catalyses the reaction UDP-N-acetyl-alpha-D-muramate + NADP(+) = UDP-N-acetyl-3-O-(1-carboxyvinyl)-alpha-D-glucosamine + NADPH + H(+). It functions in the pathway cell wall biogenesis; peptidoglycan biosynthesis. Its function is as follows. Cell wall formation. This Bacillus cereus (strain ATCC 14579 / DSM 31 / CCUG 7414 / JCM 2152 / NBRC 15305 / NCIMB 9373 / NCTC 2599 / NRRL B-3711) protein is UDP-N-acetylenolpyruvoylglucosamine reductase 1 (murB1).